Consider the following 229-residue polypeptide: Large ribosomal subunit protein uL1 (229 aa).

The protein belongs to the universal ribosomal protein uL1 family. In terms of assembly, part of the 50S ribosomal subunit.

Functionally, binds directly to 23S rRNA. The L1 stalk is quite mobile in the ribosome, and is involved in E site tRNA release. Its function is as follows. Protein L1 is also a translational repressor protein, it controls the translation of the L11 operon by binding to its mRNA. This is Large ribosomal subunit protein uL1 from Streptococcus pyogenes serotype M1.